Consider the following 412-residue polypeptide: MILTSVLGSGPRSWSSLWPLLGSSLSLRARSTSATDTHHVELARERSKTVTSFYNQSAIDVAAEKPSVRLTPTMMLYSGRSQDGSHLLKSGRYLQQELPVRIAHRIKGFRSLPFIIGCNPTILHVHELYIRAFQKLTDFPPIKDQADEAQYCQLVRQLLDDHKDVVTLLAEGLRESRKHIQDEKLVRYFLDKTLTSRLGIRMLATHHLALHEDKPDFVGIICTRLSPKKIIEKWVDFARRLCEHKYGNAPRVRINGHVAARFPFIPMPLDYILPELLKNAMRATMESHLDTPYNVPDVVITIANNDIDLIIRISDRGGGIAHKDLDRVMDYHFTTAEASTQDPRINPLFGHLDMHSGGQSGPMHGFGFGLPTSRAYAEYLGGSLQLQSLQGIGTDVYLRLRHIDGREESFRI.

The transit peptide at 1–30 (MILTSVLGSGPRSWSSLWPLLGSSLSLRAR) directs the protein to the mitochondrion. S31 carries the post-translational modification Phosphoserine. S52 is subject to Phosphoserine; by autocatalysis. The region spanning 159–404 (LDDHKDVVTL…DVYLRLRHID (246 aa)) is the Histidine kinase domain. K192 and K233 each carry N6-acetyllysine. Residues N279 and D315 each coordinate ATP. Residue N279 coordinates Mg(2+). K(+)-binding residues include V328, D330, and F333. Residues T334 and T335 each contribute to the ATP site. A phosphoserine mark is found at S356 and S360. H364, G367, and L370 together coordinate ATP. G367 serves as a coordination point for K(+).

The protein belongs to the PDK/BCKDK protein kinase family. As to quaternary structure, homodimer. Homotetramer. Dimerizes through interaction of two opposing nucleotide-binding domains. Interacts with E2 component of the branched-chain alpha-ketoacid dehydrogenase (BCKDH) complex. Competes with BCKDK for binding to the E2 component; this interaction is modulated by branched-chain alpha-keto acids. At steady state, BCKDH holoenzyme contains BCKDK and BCKDHA is phosphorylated. In response to high levels of branched-chain alpha-keto acids, the inhibitory BCKDK is replaced by activating PPM1K leading to BCKDHA dephosphorylation and BCAA degradation. Post-translationally, autophosphorylated. In terms of tissue distribution, ubiquitous.

The protein resides in the mitochondrion matrix. The protein localises to the mitochondrion. The enzyme catalyses L-seryl-[3-methyl-2-oxobutanoate dehydrogenase] + ATP = O-phospho-L-seryl-[3-methyl-2-oxobutanoate dehydrogenase] + ADP + H(+). It catalyses the reaction L-seryl-[protein] + ATP = O-phospho-L-seryl-[protein] + ADP + H(+). In terms of biological role, serine/threonine-protein kinase component of macronutrients metabolism. Forms a functional kinase and phosphatase pair with PPM1K, serving as a metabolic regulatory node that coordinates branched-chain amino acids (BCAAs) with glucose and lipid metabolism via two distinct phosphoprotein targets: mitochondrial BCKDHA subunit of the branched-chain alpha-ketoacid dehydrogenase (BCKDH) complex and cytosolic ACLY, a lipogenic enzyme of Krebs cycle. Phosphorylates and inactivates mitochondrial BCKDH complex a multisubunit complex consisting of three multimeric components each involved in different steps of BCAA catabolism: E1 composed of BCKDHA and BCKDHB, E2 core composed of DBT monomers, and E3 composed of DLD monomers. Associates with the E2 component of BCKDH complex and phosphorylates BCKDHA on Ser-334, leading to conformational changes that interrupt substrate channeling between E1 and E2 and inactivates the BCKDH complex. Phosphorylates ACLY on Ser-455 in response to changes in cellular carbohydrate abundance such as occurs during fasting to feeding metabolic transition. Refeeding stimulates MLXIPL/ChREBP transcription factor, leading to increased BCKDK to PPM1K expression ratio, phosphorylation and activation of ACLY that ultimately results in the generation of malonyl-CoA and oxaloacetate immediate substrates of de novo lipogenesis and glucogenesis, respectively. Recognizes phosphosites having SxxE/D canonical motif. The polypeptide is Branched-chain alpha-ketoacid dehydrogenase kinase (Bckdk) (Mus musculus (Mouse)).